Here is a 324-residue protein sequence, read N- to C-terminus: Glutathione synthetase (324 aa).

The ATP-grasp domain occupies 133 to 317; sequence KMYALQFTKA…LAHQVIQWVE (185 aa). Position 159–215 (159–215) interacts with ATP; sequence VEAKGATVLKPLGNKAGEGILFLQAGDRNFNSIVELSTQQGRLPVMVQTYLPEAKEG. Mg(2+) contacts are provided by E288 and N290.

It belongs to the prokaryotic GSH synthase family. Requires Mg(2+) as cofactor. The cofactor is Mn(2+).

It catalyses the reaction gamma-L-glutamyl-L-cysteine + glycine + ATP = glutathione + ADP + phosphate + H(+). It functions in the pathway sulfur metabolism; glutathione biosynthesis; glutathione from L-cysteine and L-glutamate: step 2/2. In Nostoc sp. (strain PCC 7120 / SAG 25.82 / UTEX 2576), this protein is Glutathione synthetase.